The chain runs to 367 residues: PR domain zinc finger protein 12 (367 aa).

Positions 86–203 constitute an SET domain; the sequence is AEVIIAQSSI…PDQELLVWYG (118 aa). C2H2-type zinc fingers lie at residues 243–265, 271–293, and 299–323; these read MRCV…MRIH, FVCR…VRLH, and YKCQ…SARH. The interval 318 to 337 is disordered; it reads QKSARHRPPSTALQAHSPAL.

It belongs to the class V-like SAM-binding methyltransferase superfamily. As to quaternary structure, interacts with EHMT2. Not found in adult tissues except in dorsal root ganglia.

The protein resides in the nucleus. Functionally, transcriptional regulator necessary for the development of nociceptive neurons, playing a key role in determining the nociceptive lineage from neural crest cell progenitors. Initiates neurogenesis and activates downstream pro-neuronal transcription factors, such as NEUROD1, BRN3A, and ISL1, specifically within nociceptive neurons, while repressing non-nociceptor cell fates. Essential for the proper function of nociceptors in adults, influencing both their excitability and their gene expression, thereby impacting how these neurons respond to various pain stimuli. This chain is PR domain zinc finger protein 12 (PRDM12), found in Homo sapiens (Human).